Consider the following 348-residue polypeptide: tRNA N6-adenosine threonylcarbamoyltransferase (348 aa).

Fe cation is bound by residues His109 and His113. Substrate is bound by residues 136 to 140 (TVSGG), Asp169, Gly182, Asp186, and Asn284. Asp312 is a binding site for Fe cation.

This sequence belongs to the KAE1 / TsaD family. Fe(2+) serves as cofactor.

It is found in the cytoplasm. The enzyme catalyses L-threonylcarbamoyladenylate + adenosine(37) in tRNA = N(6)-L-threonylcarbamoyladenosine(37) in tRNA + AMP + H(+). Its function is as follows. Required for the formation of a threonylcarbamoyl group on adenosine at position 37 (t(6)A37) in tRNAs that read codons beginning with adenine. Is involved in the transfer of the threonylcarbamoyl moiety of threonylcarbamoyl-AMP (TC-AMP) to the N6 group of A37, together with TsaE and TsaB. TsaD likely plays a direct catalytic role in this reaction. The sequence is that of tRNA N6-adenosine threonylcarbamoyltransferase from Chlorobium luteolum (strain DSM 273 / BCRC 81028 / 2530) (Pelodictyon luteolum).